An 819-amino-acid chain; its full sequence is Disintegrin and metalloproteinase domain-containing protein 9 (819 aa).

Positions 1-28 (MGSGARFPSGTLRVRWLLLLGLVGPVLG) are cleaved as a signal peptide. The Extracellular portion of the chain corresponds to 29 to 697 (AARPGFQQTS…YNEMNTALRD (669 aa)). N-linked (GlcNAc...) asparagine glycans are attached at residues N125, N144, N154, and N231. Residues 212 to 406 (RYVELFIVVD…KGGNCLLNIP (195 aa)) enclose the Peptidase M12B domain. Cystine bridges form between C322-C401, C363-C385, C365-C370, C473-C493, C644-C656, C650-C662, and C664-C673. A Zn(2+)-binding site is contributed by H347. E348 is a catalytic residue. H351 and H357 together coordinate Zn(2+). Residues N381 and N487 are each glycosylated (N-linked (GlcNAc...) asparagine). The Disintegrin domain occupies 414-501 (APSCGNKLVD…FCQPDVFIQN (88 aa)). The EGF-like domain occupies 644–698 (CDVQKKCHGHGVCNSNKNCHCENGWAPPNCETKGYGGSVDSGPTYNEMNTALRDG). A helical membrane pass occupies residues 698–718 (GLLVFFFLIVPLIVCAIFIFI). The Cytoplasmic segment spans residues 719-819 (KRDQLWRSYF…PAPPLYSSLT (101 aa)). Disordered stretches follow at residues 734–763 (QTYE…VTPP) and 780–819 (AKQP…SSLT). Polar residues predominate over residues 735–750 (TYESDGKNQANPSRQP). A Phosphoserine modification is found at S758. A Phosphothreonine modification is found at T761.

In terms of assembly, interacts with SH3GL2 and SNX9 through its cytoplasmic tail. Interacts with ITGA6. Zn(2+) serves as cofactor. Proteolytically cleaved in the trans-Golgi network before it reaches the plasma membrane to generate a mature protein. The removal of the pro-domain occurs via cleavage at two different sites. Processed most likely by a pro-protein convertase such as furin, at the boundary between the pro-domain and the catalytic domain. An additional upstream cleavage pro-protein convertase site (Arg-56/Glu-57) has an important role in the activation of ADAM9. In terms of processing, phosphorylation is induced in vitro by phorbol-12-myristate-13-acetate (PMA). Widely expressed. Expressed in chondrocytes. Isoform 2 is highly expressed in liver and heart.

It is found in the cell membrane. The protein resides in the secreted. Synthesized as an inactive form which is proteolytically cleaved to generate an active enzyme. Processing at the upstream site is particularly important for activation of the proenzyme, whereas processing at the boundary between the pro-domain and the catalytic domain does not appear to be essential. Inhibited by hydroxamic acid-based inhibitors. Functionally, metalloprotease that cleaves and releases a number of molecules with important roles in tumorigenesis and angiogenesis, such as TEK, KDR, EPHB4, CD40, VCAM1 and CDH5. May mediate cell-cell, cell-matrix interactions and regulate the motility of cells via interactions with integrins. May act as alpha-secretase for amyloid precursor protein (APP). This chain is Disintegrin and metalloproteinase domain-containing protein 9 (ADAM9), found in Homo sapiens (Human).